Here is a 238-residue protein sequence, read N- to C-terminus: dITP/XTP pyrophosphatase (238 aa).

Residue 7–12 (SANQHK) participates in substrate binding. The active-site Proton acceptor is the aspartate 89. Aspartate 89 lines the Mg(2+) pocket. Residues serine 90, 191-194 (FGYD), lysine 217, and 222-223 (HR) contribute to the substrate site.

Belongs to the HAM1 NTPase family. Homodimer. The cofactor is Mg(2+).

It catalyses the reaction XTP + H2O = XMP + diphosphate + H(+). The enzyme catalyses dITP + H2O = dIMP + diphosphate + H(+). It carries out the reaction ITP + H2O = IMP + diphosphate + H(+). Functionally, pyrophosphatase that catalyzes the hydrolysis of nucleoside triphosphates to their monophosphate derivatives, with a high preference for the non-canonical purine nucleotides XTP (xanthosine triphosphate), dITP (deoxyinosine triphosphate) and ITP. Seems to function as a house-cleaning enzyme that removes non-canonical purine nucleotides from the nucleotide pool, thus preventing their incorporation into DNA/RNA and avoiding chromosomal lesions. In Helicobacter hepaticus (strain ATCC 51449 / 3B1), this protein is dITP/XTP pyrophosphatase.